The chain runs to 523 residues: Sporulation protein 23 (523 aa).

In terms of assembly, interacts with SPO1 in meiosis.

Its function is as follows. Regulates expression of PIS1. The chain is Sporulation protein 23 (SPO23) from Saccharomyces cerevisiae (strain ATCC 204508 / S288c) (Baker's yeast).